A 201-amino-acid chain; its full sequence is Ras-related protein Rab-9B (201 aa).

Valine 18, glycine 19, lysine 20, serine 21, serine 22, aspartate 33, serine 34, alanine 36, histidine 38, and threonine 39 together coordinate GTP. Serine 21 contacts Mg(2+). Residues 31–42 (KFDSQAFHTIGV) carry the Switch 1 motif. A Phosphoserine modification is found at serine 34. Positions 39 and 62 each coordinate Mg(2+). The Switch 2 motif lies at 64–78 (AGQERFKSLRTPFYR). Glycine 65, asparagine 124, lysine 125, alanine 155, and lysine 156 together coordinate GTP. 2 S-geranylgeranyl cysteine lipidation sites follow: cysteine 200 and cysteine 201.

The protein belongs to the small GTPase superfamily. Rab family. As to quaternary structure, interacts (GTP-bound form) with SGSM1; the GDP-bound form has much lower affinity for SGSM1. The GTP-bound form but not the GDP-bound form interacts with HPS4 and the BLOC-3 complex (heterodimer of HPS1 and HPS4) but does not interact with HPS1 alone. Interacts (GTP-bound form) with NDE1. Mg(2+) serves as cofactor.

The protein resides in the cell membrane. The protein localises to the cytoplasmic vesicle. It localises to the phagosome membrane. It catalyses the reaction GTP + H2O = GDP + phosphate + H(+). With respect to regulation, regulated by guanine nucleotide exchange factors (GEFs) which promote the exchange of bound GDP for free GTP. Regulated by GTPase activating proteins (GAPs) which increase the GTP hydrolysis activity. Inhibited by GDP dissociation inhibitors (GDIs). In terms of biological role, the small GTPases Rab are key regulators of intracellular membrane trafficking, from the formation of transport vesicles to their fusion with membranes. Rabs cycle between an inactive GDP-bound form and an active GTP-bound form that is able to recruit to membranes different sets of downstream effectors directly responsible for vesicle formation, movement, tethering and fusion. RAB9B is involved in the transport of proteins between the endosomes and the trans Golgi network. May use NDE1/NDEL1 as an effector to interact with the dynein motor complex in order to control retrograde trafficking of RAB9-associated late endosomes to the TGN. This Pongo abelii (Sumatran orangutan) protein is Ras-related protein Rab-9B (RAB9B).